We begin with the raw amino-acid sequence, 162 residues long: Transcription elongation factor GreA (162 aa).

Residues 45–74 (ENAEYEAAREKQAFIEGRIKELEDMTARAE) are a coiled coil.

The protein belongs to the GreA/GreB family.

Its function is as follows. Necessary for efficient RNA polymerase transcription elongation past template-encoded arresting sites. The arresting sites in DNA have the property of trapping a certain fraction of elongating RNA polymerases that pass through, resulting in locked ternary complexes. Cleavage of the nascent transcript by cleavage factors such as GreA or GreB allows the resumption of elongation from the new 3'terminus. GreA releases sequences of 2 to 3 nucleotides. The chain is Transcription elongation factor GreA from Rickettsia prowazekii (strain Madrid E).